Here is a 553-residue protein sequence, read N- to C-terminus: uncharacterized protein (553 aa).

The 84-residue stretch at 26 to 109 (RFEFVGWGSR…YDLLEKHYKE (84 aa)) folds into the SWIB/MDM2 domain. Positions 150 to 275 (AIVSDNIKLL…KAKKLHKDQT (126 aa)) constitute a Plus3 domain. Disordered regions lie at residues 335 to 357 (QNPE…SESP) and 447 to 482 (PVNN…ETLD). Over residues 343 to 353 (EAHKSDNEQRL) the composition is skewed to basic and acidic residues. The span at 447 to 461 (PVNNVDNGSQVQPNP) shows a compositional bias: polar residues. The span at 466 to 480 (ELSDDDEDDNGDGET) shows a compositional bias: acidic residues. The 55-residue stretch at 497 to 551 (KLNWLYKDPQGLVQGPFSLTQLKAWSDAEYFTKQFRVWMTGESMESAVLLTDVLR) folds into the GYF domain.

This is an uncharacterized protein from Arabidopsis thaliana (Mouse-ear cress).